The following is a 313-amino-acid chain: Protein FixB (313 aa).

255-283 (LYLAVGISGQIQHMVGANASQTIFAINKD) provides a ligand contact to FAD.

Belongs to the ETF alpha-subunit/FixB family. As to quaternary structure, heterodimer of FixA and FixB.

The protein operates within amine and polyamine metabolism; carnitine metabolism. Functionally, required for anaerobic carnitine reduction. May bring reductant to CaiA. In Shigella flexneri, this protein is Protein FixB.